Here is a 400-residue protein sequence, read N- to C-terminus: Cytochrome b (400 aa).

The next 4 membrane-spanning stretches (helical) occupy residues 32–52 (FGSLLALCLGIQIVTGVTLAM), 76–98 (WLIRYLHSNTASAFFFLVYLHIG), 113–133 (TWSIGTIIFIAMVATAFLGYV), and 179–199 (FFSLHFLLPFILAALVLMHLI). Heme b is bound by residues His82 and His96. Residues His183 and His197 each coordinate heme b. His202 contacts a ubiquinone. 4 helical membrane-spanning segments follow: residues 226–246 (YLFKDLVTIFLFMLILSIFVF), 290–310 (AVGVVLMFGAILIILALPYLD), 322–342 (LSKVAFYIFVANFLVLMQLGA), and 349–369 (FIVFGQLSTILYFSYFIIIIP).

The protein belongs to the cytochrome b family. Fungal cytochrome b-c1 complex contains 10 subunits; 3 respiratory subunits, 2 core proteins and 5 low-molecular weight proteins. Cytochrome b-c1 complex is a homodimer. The cofactor is heme b.

The protein localises to the mitochondrion inner membrane. In terms of biological role, component of the ubiquinol-cytochrome c reductase complex (complex III or cytochrome b-c1 complex) that is part of the mitochondrial respiratory chain. The b-c1 complex mediates electron transfer from ubiquinol to cytochrome c. Contributes to the generation of a proton gradient across the mitochondrial membrane that is then used for ATP synthesis. The protein is Cytochrome b (cob) of Epidermophyton floccosum.